Consider the following 1187-residue polypeptide: Intraflagellar transport protein 122 homolog (1187 aa).

WD repeat units follow at residues 16 to 54 (KVEQCIYDLAFRPDGSQLIVAAGNRVLVYDTADGTLIQP), 57 to 97 (GHKD…LKYT), 99 to 135 (NDSIQCVSYNPVTHQLASCSSGDFGLWSPEQKSVSKH), 137 to 175 (VSSKITCCGWTNDGQYLALGMMNGVVSIRNKNGEEKVKI), 180 to 223 (GSSS…IGKD), 225 to 264 (SLTFDPCCVSFFSKGEYMVLCGSDRQAALYTRDGVRLGSI), 266 to 306 (EQNA…HGLY), and 459 to 498 (KQNTSVRCLDMSSNRSRLAVVDEHNTCLVYDIHTRELLFQ). The disordered stretch occupies residues 1070-1094 (KSWQEMSSGESQCLKLEDGPDDPED).

As to quaternary structure, component of the IFT complex A (IFT-A) complex.

It localises to the cell projection. The protein localises to the cilium. It is found in the cytoplasm. Its subcellular location is the cytoskeleton. The protein resides in the cilium basal body. Required for cilia formation during embryonal development. Acts as a negative regulator of Shh signaling. The polypeptide is Intraflagellar transport protein 122 homolog (ift122) (Danio rerio (Zebrafish)).